A 140-amino-acid chain; its full sequence is Ergosterol biosynthetic protein 28 homolog (140 aa).

Helical transmembrane passes span 4–24 (FLNV…GNTL), 52–72 (TFGI…IDIH), 79–99 (ITLW…FVYG), and 105–125 (IGVL…LVGL).

Belongs to the ERG28 family. Ubiquitous; strongly expressed in testis and some cancer cell lines.

The protein localises to the endoplasmic reticulum membrane. This is Ergosterol biosynthetic protein 28 homolog from Homo sapiens (Human).